The chain runs to 122 residues: Small ribosomal subunit protein uS13 (122 aa).

Basic residues predominate over residues 98-116; the sequence is VRGQKTKTNARTRKGRRKT. A disordered region spans residues 98-122; that stretch reads VRGQKTKTNARTRKGRRKTVGAATK.

It belongs to the universal ribosomal protein uS13 family. In terms of assembly, part of the 30S ribosomal subunit. Forms a loose heterodimer with protein S19. Forms two bridges to the 50S subunit in the 70S ribosome.

Functionally, located at the top of the head of the 30S subunit, it contacts several helices of the 16S rRNA. In the 70S ribosome it contacts the 23S rRNA (bridge B1a) and protein L5 of the 50S subunit (bridge B1b), connecting the 2 subunits; these bridges are implicated in subunit movement. Contacts the tRNAs in the A and P-sites. The chain is Small ribosomal subunit protein uS13 from Campylobacter fetus subsp. fetus (strain 82-40).